The sequence spans 351 residues: Uroporphyrinogen decarboxylase (351 aa).

Residues 25 to 29 (RQAGR), Asp-74, Tyr-151, Ser-206, and His-325 each bind substrate.

This sequence belongs to the uroporphyrinogen decarboxylase family. As to quaternary structure, homodimer.

It localises to the cytoplasm. It carries out the reaction uroporphyrinogen III + 4 H(+) = coproporphyrinogen III + 4 CO2. Its pathway is porphyrin-containing compound metabolism; protoporphyrin-IX biosynthesis; coproporphyrinogen-III from 5-aminolevulinate: step 4/4. Catalyzes the decarboxylation of four acetate groups of uroporphyrinogen-III to yield coproporphyrinogen-III. The polypeptide is Uroporphyrinogen decarboxylase (Chlorobium luteolum (strain DSM 273 / BCRC 81028 / 2530) (Pelodictyon luteolum)).